The sequence spans 296 residues: Ribosomal RNA small subunit methyltransferase A (296 aa).

Positions 30, 32, 57, 78, 103, and 128 each coordinate S-adenosyl-L-methionine.

It belongs to the class I-like SAM-binding methyltransferase superfamily. rRNA adenine N(6)-methyltransferase family. RsmA subfamily.

It localises to the cytoplasm. The catalysed reaction is adenosine(1518)/adenosine(1519) in 16S rRNA + 4 S-adenosyl-L-methionine = N(6)-dimethyladenosine(1518)/N(6)-dimethyladenosine(1519) in 16S rRNA + 4 S-adenosyl-L-homocysteine + 4 H(+). In terms of biological role, specifically dimethylates two adjacent adenosines (A1518 and A1519) in the loop of a conserved hairpin near the 3'-end of 16S rRNA in the 30S particle. May play a critical role in biogenesis of 30S subunits. This Macrococcus caseolyticus (strain JCSC5402) (Macrococcoides caseolyticum) protein is Ribosomal RNA small subunit methyltransferase A.